The chain runs to 379 residues: ATP phosphoribosyltransferase regulatory subunit (379 aa).

Belongs to the class-II aminoacyl-tRNA synthetase family. HisZ subfamily. Heteromultimer composed of HisG and HisZ subunits.

It localises to the cytoplasm. Its pathway is amino-acid biosynthesis; L-histidine biosynthesis; L-histidine from 5-phospho-alpha-D-ribose 1-diphosphate: step 1/9. Functionally, required for the first step of histidine biosynthesis. May allow the feedback regulation of ATP phosphoribosyltransferase activity by histidine. This is ATP phosphoribosyltransferase regulatory subunit from Sinorhizobium fredii (strain NBRC 101917 / NGR234).